We begin with the raw amino-acid sequence, 914 residues long: UPF0182 protein Syncc9605_1323 (914 aa).

A run of 9 helical transmembrane segments spans residues 4–24, 37–57, 81–101, 123–143, 152–172, 195–215, 240–260, 285–305, and 312–332; these read LLLLLPLVVVAARMQIEWLWF, WLLQVLLAGVAMLPLLAARAW, IALLICAVVVLISALLTLDLL, RIGSVVKLVQVGGIGLAMTWL, IVAASWVVVVSRTWGIWSLAL, FAGLHLALDLLLLGATFTLVF, MRLIRLLSALLLFGAAGLVWL, LPLRGFATLLLLLMGLALLLP, and QFLALALATLVMLETLATPLT.

This sequence belongs to the UPF0182 family.

The protein localises to the cell membrane. This chain is UPF0182 protein Syncc9605_1323, found in Synechococcus sp. (strain CC9605).